Here is a 76-residue protein sequence, read N- to C-terminus: DNA-directed RNA polymerase subunit omega (76 aa).

It belongs to the RNA polymerase subunit omega family. In cyanobacteria the RNAP catalytic core is composed of 2 alpha, 1 beta, 1 beta', 1 gamma and 1 omega subunit. When a sigma factor is associated with the core the holoenzyme is formed, which can initiate transcription.

The catalysed reaction is RNA(n) + a ribonucleoside 5'-triphosphate = RNA(n+1) + diphosphate. In terms of biological role, promotes RNA polymerase assembly. Latches the N- and C-terminal regions of the beta' subunit thereby facilitating its interaction with the beta and alpha subunits. The chain is DNA-directed RNA polymerase subunit omega (rpoZ) from Synechocystis sp. (strain ATCC 27184 / PCC 6803 / Kazusa).